The chain runs to 79 residues: Conotoxin LiCr173 (79 aa).

Residues 1–20 form the signal peptide; the sequence is MSGLGTMVLTLLLLVFMVTS. A propeptide spanning residues 21 to 46 is cleaved from the precursor; that stretch reads HQDGGKKQATQRNAVNIRRRKSITQR. 3 disulfides stabilise this stretch: Cys-52–Cys-64, Cys-56–Cys-73, and Cys-63–Cys-77. Phe-78 carries the post-translational modification Phenylalanine amide.

It belongs to the conotoxin O3 superfamily. In terms of tissue distribution, expressed by the venom duct.

The protein resides in the secreted. This chain is Conotoxin LiCr173, found in Conus lividus (Livid cone).